Here is a 291-residue protein sequence, read N- to C-terminus: Glycine--tRNA ligase alpha subunit (291 aa).

Belongs to the class-II aminoacyl-tRNA synthetase family. As to quaternary structure, tetramer of two alpha and two beta subunits.

It is found in the cytoplasm. It catalyses the reaction tRNA(Gly) + glycine + ATP = glycyl-tRNA(Gly) + AMP + diphosphate. This is Glycine--tRNA ligase alpha subunit from Coprothermobacter proteolyticus (strain ATCC 35245 / DSM 5265 / OCM 4 / BT).